The primary structure comprises 783 residues: Spindle pole body protein ppc89 (783 aa).

Serine 157 carries the post-translational modification Phosphoserine. Disordered regions lie at residues 180 to 216 (FDSPTEALPPKPTTPWRRNGFRSKTTPNLNSGKETPS), 434 to 458 (KESNVTSKIKSTAENSSKPLSMNEA), 471 to 504 (ENKSGANTKEMSNGTETAKENCSPQQDSTSPTSG), and 528 to 610 (LSQS…MKGN). Composition is skewed to polar residues over residues 201–216 (RSKTTPNLNSGKETPS), 437–453 (NVTSKIKSTAENSSKPL), and 474–504 (SGANTKEMSNGTETAKENCSPQQDSTSPTSG). A compositionally biased stretch (basic residues) spans 536–551 (PVKHRKRRPKSKRRIT). Positions 566-590 (ESDEGSEEISLDSEYSDILSDDGDF) are enriched in acidic residues.

It localises to the cytoplasm. The protein localises to the cytoskeleton. The protein resides in the microtubule organizing center. Its subcellular location is the spindle pole body. In terms of biological role, has a role in meiosis. The protein is Spindle pole body protein ppc89 (ppc89) of Schizosaccharomyces pombe (strain 972 / ATCC 24843) (Fission yeast).